The primary structure comprises 245 residues: Phosphoribosylaminoimidazole-succinocarboxamide synthase (245 aa).

This sequence belongs to the SAICAR synthetase family.

It catalyses the reaction 5-amino-1-(5-phospho-D-ribosyl)imidazole-4-carboxylate + L-aspartate + ATP = (2S)-2-[5-amino-1-(5-phospho-beta-D-ribosyl)imidazole-4-carboxamido]succinate + ADP + phosphate + 2 H(+). It participates in purine metabolism; IMP biosynthesis via de novo pathway; 5-amino-1-(5-phospho-D-ribosyl)imidazole-4-carboxamide from 5-amino-1-(5-phospho-D-ribosyl)imidazole-4-carboxylate: step 1/2. This is Phosphoribosylaminoimidazole-succinocarboxamide synthase from Acaryochloris marina (strain MBIC 11017).